The sequence spans 400 residues: Large envelope protein (400 aa).

The residue at position 1 (Met-1) is an N-acetylmethionine. Disordered stretches follow at residues 1-24 (MGGW…PLGF) and 86-114 (TTVP…PLRD). Residue Gly-2 is the site of N-myristoyl glycine; by host attachment. The segment at 2-119 (GGWSSKPRKG…PPLRDTHPQA (118 aa)) is pre-S1. Residues 2 to 174 (GGWSSKPRKG…SSKTGDPVPN (173 aa)) form a pre-S region. At 2 to 181 (GGWSSKPRKG…VPNMENIASG (180 aa)) the chain is on the virion surface; in external conformation side. At 2 to 253 (GGWSSKPRKG…PGYRWMCLRR (252 aa)) the chain is on the intravirion; in internal conformation side. An N-linked (GlcNAc...) asparagine glycan is attached at Trp-4. Residues 96 to 106 (STNRQSGRQPT) are compositionally biased toward polar residues. The tract at residues 120–174 (MQWNSTTFLQTLQDSRVRALYLPAGGSSSGTVSPAQNTVSAISSISSKTGDPVPN) is pre-S2. The helical transmembrane segment at 182–202 (LLGHLLVLQAGFFSLTKILTI) threads the bilayer. The Intravirion; in external conformation segment spans residues 203 to 253 (PQSLDSWWTSLNFLGGTPACPGQNSQSQISSHSPTCCPPICPGYRWMCLRR). The helical transmembrane segment at 254–274 (FIIFLCILLLCLIFLLVLLDY) threads the bilayer. Residues 275–348 (QGMLPVCPLT…WASVRFSWLS (74 aa)) are Virion surface-facing. An N-linked (GlcNAc...) asparagine; by host glycan is attached at Asn-320. The helical transmembrane segment at 349–369 (LLVPFVQWFVGLSPTVWLSVI) threads the bilayer. The Intravirion portion of the chain corresponds to 370-375 (WMMWFW). The chain crosses the membrane as a helical span at residues 376 to 398 (GPSLYNILRPFMPLLPTFFCLWV). Over 399–400 (YI) the chain is Virion surface.

It belongs to the orthohepadnavirus major surface antigen family. As to quaternary structure, interacts (via its myristoylated pre-S1 region) with the host SLC10A1/NTCP; this interaction is essential for viral entry. In its internal form (Li-HBsAg), interacts with the capsid protein and with the isoform S. Interacts with host chaperone CANX. In terms of assembly, associates with host chaperone CANX through its pre-S2 N glycan; this association may be essential for isoform M proper secretion. As to quaternary structure, interacts with isoform L. Interacts with the antigens of satellite virus HDV (HDVAgs); this interaction is required for encapsidation of HDV genomic RNA. Post-translationally, isoform M is N-terminally acetylated by host at a ratio of 90%, and N-glycosylated by host at the pre-S2 region. In terms of processing, myristoylated; this modification is essential for its interaction with the host protein SLC10A1/NTCP.

The protein localises to the virion membrane. Its function is as follows. The large envelope protein exists in two topological conformations, one which is termed 'external' or Le-HBsAg and the other 'internal' or Li-HBsAg. In its external conformation the protein attaches the virus to cell receptors and thereby initiating infection. This interaction determines the species specificity and liver tropism. This attachment induces virion internalization predominantly through caveolin-mediated endocytosis. The large envelope protein also assures fusion between virion membrane and endosomal membrane. In its internal conformation the protein plays a role in virion morphogenesis and mediates the contact with the nucleocapsid like a matrix protein. Functionally, the middle envelope protein plays an important role in the budding of the virion. It is involved in the induction of budding in a nucleocapsid independent way. In this process the majority of envelope proteins bud to form subviral lipoprotein particles of 22 nm of diameter that do not contain a nucleocapsid. The protein is Large envelope protein of Hepatitis B virus genotype B2 subtype adw (isolate China/patient4/1996) (HBV-B).